The primary structure comprises 316 residues: 4-hydroxy-3-methylbut-2-enyl diphosphate reductase (316 aa).

Residue Cys-12 coordinates [4Fe-4S] cluster. (2E)-4-hydroxy-3-methylbut-2-enyl diphosphate is bound by residues His-41 and His-74. Dimethylallyl diphosphate-binding residues include His-41 and His-74. Positions 41 and 74 each coordinate isopentenyl diphosphate. Cys-96 contacts [4Fe-4S] cluster. His-124 serves as a coordination point for (2E)-4-hydroxy-3-methylbut-2-enyl diphosphate. His-124 serves as a coordination point for dimethylallyl diphosphate. His-124 is a binding site for isopentenyl diphosphate. Glu-126 serves as the catalytic Proton donor. Thr-169 lines the (2E)-4-hydroxy-3-methylbut-2-enyl diphosphate pocket. Cys-199 serves as a coordination point for [4Fe-4S] cluster. (2E)-4-hydroxy-3-methylbut-2-enyl diphosphate contacts are provided by Ser-227, Ser-228, Asn-229, and Ser-271. Residues Ser-227, Ser-228, Asn-229, and Ser-271 each coordinate dimethylallyl diphosphate. Residues Ser-227, Ser-228, Asn-229, and Ser-271 each contribute to the isopentenyl diphosphate site.

The protein belongs to the IspH family. [4Fe-4S] cluster is required as a cofactor.

The enzyme catalyses isopentenyl diphosphate + 2 oxidized [2Fe-2S]-[ferredoxin] + H2O = (2E)-4-hydroxy-3-methylbut-2-enyl diphosphate + 2 reduced [2Fe-2S]-[ferredoxin] + 2 H(+). The catalysed reaction is dimethylallyl diphosphate + 2 oxidized [2Fe-2S]-[ferredoxin] + H2O = (2E)-4-hydroxy-3-methylbut-2-enyl diphosphate + 2 reduced [2Fe-2S]-[ferredoxin] + 2 H(+). It functions in the pathway isoprenoid biosynthesis; dimethylallyl diphosphate biosynthesis; dimethylallyl diphosphate from (2E)-4-hydroxy-3-methylbutenyl diphosphate: step 1/1. It participates in isoprenoid biosynthesis; isopentenyl diphosphate biosynthesis via DXP pathway; isopentenyl diphosphate from 1-deoxy-D-xylulose 5-phosphate: step 6/6. Catalyzes the conversion of 1-hydroxy-2-methyl-2-(E)-butenyl 4-diphosphate (HMBPP) into a mixture of isopentenyl diphosphate (IPP) and dimethylallyl diphosphate (DMAPP). Acts in the terminal step of the DOXP/MEP pathway for isoprenoid precursor biosynthesis. This is 4-hydroxy-3-methylbut-2-enyl diphosphate reductase from Vibrio cholerae serotype O1 (strain ATCC 39315 / El Tor Inaba N16961).